Here is a 369-residue protein sequence, read N- to C-terminus: Polycomb group protein FERTILIZATION-INDEPENDENT ENDOSPERM (369 aa).

WD repeat units lie at residues 31–73 (EGKK…AISA), 81–123 (DKEE…IHKS), 126–166 (GHGD…CILI), 172–212 (GHRY…TYVE), 238–275 (IHTN…NSPG), 287–328 (VPMC…PVLI), and 335–368 (QSKS…DVIT).

It belongs to the WD repeat ESC family. As to quaternary structure, interacts directly with MEA. These two proteins are probably indirectly associated with FIS2. In plants, PcG complexes are probably composed of a member of the EZ family (CLF or MEA), FIE, and a member of the VEFS family (FIS2, VRN2 or EMF2). Component of the plant homeodomain / polycomb repressive complex 2 (PHD-PRC2) large complex during prolonged cold, composed of core PRC2 components (VRN2, EZA1, FIE and MSI1), and three related PHD finger proteins (VIL1, VIL2 and VIN3) that mediates histone H3 trimethylation on 'Lys-27' (H3K27me3). Binds to ALP1. Expressed in cauline leaves, root and stems. In the male reproductive organ, it is expressed in the developing anther; and is abundant in microspore mother cells, in microsporocytes and in the tapetum, but is absent from vascular bundles, the connective tissue and the filament. It is also absent from pollen grains at subsequent developmental stages. In the developing female reproductive organs, it is highly expressed in all cells of the young ovules primordium before archesporial differentiation. Then, it is highly expressed in the ovule sporophytic tissue and the megaspore mother cell before meiosis, but is absent from placenta or the developing carpel. Then, it decreases.

It is found in the nucleus. Its function is as follows. Polycomb group (PcG) protein. PcG proteins act by forming multiprotein complexes, which are required to maintain the transcriptionally repressive state of homeotic genes throughout development. PcG proteins are not required to initiate repression, but to maintain it during later stages of development. They probably act via the methylation of histones, rendering chromatin heritably changed in its expressibility. Required to prevent the proliferation of the central cell by repressing unknown target genes before fertilization. Probably also involved in floral repression mechanism established during early plant development. Regulates the anteroposterior organization of the endosperm. Interacts with the promoter and represses the transcription of genes such as PHE1, that are paternally active and maternally silenced. The chain is Polycomb group protein FERTILIZATION-INDEPENDENT ENDOSPERM (FIE) from Arabidopsis thaliana (Mouse-ear cress).